Here is a 1182-residue protein sequence, read N- to C-terminus: Tyrosine-protein kinase ABL2 (1182 aa).

Disordered stretches follow at residues 1 to 47 and 60 to 80; these read MGQQ…TGFN and EDGF…HRPY. The N-myristoyl glycine moiety is linked to residue G2. The interval 2 to 106 is CAP; the sequence is GQQVGRVGEA…SKENLLGATE (105 aa). A compositionally biased stretch (low complexity) spans 20–30; sequence RGIRGSSAARP. The residue at position 97 (S97) is a Phosphoserine. The 61-residue stretch at 107–167 folds into the SH3 domain; it reads SDPNLFVALY…PSNYITPVNS (61 aa). Phosphotyrosine occurs at positions 116, 161, 174, 185, 218, and 231. Residues 173-263 enclose the SH2 domain; the sequence is WYHGPVSRSA…GLVTTLHYPA (91 aa). Y261 is modified (phosphotyrosine; by ABL1 and autocatalysis). Phosphotyrosine; by autocatalysis is present on Y272. Residue S275 is modified to Phosphoserine. One can recognise a Protein kinase domain in the interval 288 to 539; the sequence is ITMKHKLGGG…PSFAETHQAF (252 aa). ATP is bound at residue 294–302; the sequence is LGGGQYGEV. A phosphotyrosine mark is found at Y299 and Y303. ATP-binding positions include K317 and 362-368; that span reads EYMPYGN. The active-site Proton acceptor is the D409. Residues 427–451 carry the Kinase activation loop motif; it reads DFGLSRLMTGDTYTAHAGAKFPIKW. A Phosphotyrosine; by autocatalysis and SRC-type Tyr-kinases modification is found at Y439. Y459 carries the post-translational modification Phosphotyrosine. Y568 carries the phosphotyrosine; by autocatalysis modification. The tract at residues 611-641 is disordered; sequence IRGAQASSGSPALPRKQRDKSPSSLLEDAKE. Residues S620, S631, and S633 each carry the phosphoserine modification. D647 carries the post-translational modification Phosphotyrosine. Residues 654 to 674 form a disordered region; the sequence is SSFMKKRNAPTPPKRSSSFRE. Position 655 is a phosphoserine (S655). The Nuclear localization signal motif lies at 658–660; that stretch reads KKR. Residues A662 and R668 each carry the phosphotyrosine modification. S669, S670, and S671 each carry phosphoserine. A phosphotyrosine mark is found at Y683 and Y718. Y683 bears the Phosphotyrosine; by autocatalysis mark. The interval 694 to 930 is F-actin-binding; that stretch reads SLQHADGFSF…PVLPTTHNHK (237 aa). The disordered stretch occupies residues 763–794; the sequence is LRAGKPTASDDTSKPFPRSNSTSSMSSGLPEQ. K776 bears the N6-acetyllysine mark. Residues 780–791 are compositionally biased toward polar residues; the sequence is RSNSTSSMSSGL. The residue at position 783 (S783) is a Phosphoserine. T800 is subject to Phosphothreonine. Over residues 807–823 the composition is skewed to polar residues; sequence RSKLQLERTVSTSSQPE. Residues 807–851 form a disordered region; the sequence is RSKLQLERTVSTSSQPEENVDRANDMLPKKSEESAAPSRERPKAK. S817 and S820 each carry phosphoserine. The segment covering 825–849 has biased composition (basic and acidic residues); the sequence is NVDRANDMLPKKSEESAAPSRERPK. Phosphoserine occurs at positions 915 and 936. The segment at 964-1024 is disordered; it reads HQVTSSGDKD…TSETQEGGKK (61 aa). Positions 1010 to 1019 are enriched in polar residues; sequence TAGQSTSETQ. An F-actin-binding region spans residues 1020 to 1182; it reads EGGKKAALGA…VQEISDVVQR (163 aa).

The protein belongs to the protein kinase superfamily. Tyr protein kinase family. ABL subfamily. In terms of assembly, interacts with PSMA7. Interacts with CTTN. Found in a complex with ABL1, ABL2, CRK and UNC119; leading to the inhibition of CRK phosphorylation by ABL kinases. The cofactor is Mg(2+). Requires Mn(2+) as cofactor. Post-translationally, phosphorylated at Tyr-261 by ABL1 in response to oxidative stress. Phosphorylated by PDGFRB. In terms of processing, polyubiquitinated. Polyubiquitination of ABL2 leads to degradation. In terms of tissue distribution, widely expressed.

It localises to the cytoplasm. Its subcellular location is the cytoskeleton. The enzyme catalyses L-tyrosyl-[protein] + ATP = O-phospho-L-tyrosyl-[protein] + ADP + H(+). With respect to regulation, stabilized in the inactive form by an association between the SH3 domain and the SH2-TK linker region, interactions of the N-terminal cap, and contributions from an N-terminal myristoyl group and phospholipids. Activated by autophosphorylation as well as by SRC-family kinase-mediated phosphorylation. Activated by RIN1 binding to the SH2 and SH3 domains. Inhibited by imatinib mesylate (Gleevec) which is used for the treatment of chronic myeloid leukemia (CML). Phosphatidylinositol 4,5-bisphosphate (PIP2), a highly abundant phosphoinositide known to regulate cytoskeletal and membrane proteins, inhibits the tyrosine kinase activity. Non-receptor tyrosine-protein kinase that plays an ABL1-overlapping role in key processes linked to cell growth and survival such as cytoskeleton remodeling in response to extracellular stimuli, cell motility and adhesion and receptor endocytosis. Coordinates actin remodeling through tyrosine phosphorylation of proteins controlling cytoskeleton dynamics like MYH10 (involved in movement); CTTN (involved in signaling); or TUBA1 and TUBB (microtubule subunits). Binds directly F-actin and regulates actin cytoskeletal structure through its F-actin-bundling activity. Involved in the regulation of cell adhesion and motility through phosphorylation of key regulators of these processes such as CRK, CRKL, DOK1 or ARHGAP35. Adhesion-dependent phosphorylation of ARHGAP35 promotes its association with RASA1, resulting in recruitment of ARHGAP35 to the cell periphery where it inhibits RHO. Phosphorylates multiple receptor tyrosine kinases like PDGFRB and other substrates which are involved in endocytosis regulation such as RIN1. In brain, may regulate neurotransmission by phosphorylating proteins at the synapse. ABL2 also acts as a regulator of multiple pathological signaling cascades during infection. Pathogens can highjack ABL2 kinase signaling to reorganize the host actin cytoskeleton for multiple purposes, like facilitating intracellular movement and host cell exit. Finally, functions as its own regulator through autocatalytic activity as well as through phosphorylation of its inhibitor, ABI1. Positively regulates chemokine-mediated T-cell migration, polarization, and homing to lymph nodes and immune-challenged tissues, potentially via activation of NEDD9/HEF1 and RAP1. This Homo sapiens (Human) protein is Tyrosine-protein kinase ABL2 (ABL2).